The following is a 211-amino-acid chain: ATP-dependent Clp protease proteolytic subunit (211 aa).

Ser-114 (nucleophile) is an active-site residue. His-139 is an active-site residue.

The protein belongs to the peptidase S14 family. In terms of assembly, fourteen ClpP subunits assemble into 2 heptameric rings which stack back to back to give a disk-like structure with a central cavity, resembling the structure of eukaryotic proteasomes.

Its subcellular location is the cytoplasm. The catalysed reaction is Hydrolysis of proteins to small peptides in the presence of ATP and magnesium. alpha-casein is the usual test substrate. In the absence of ATP, only oligopeptides shorter than five residues are hydrolyzed (such as succinyl-Leu-Tyr-|-NHMec, and Leu-Tyr-Leu-|-Tyr-Trp, in which cleavage of the -Tyr-|-Leu- and -Tyr-|-Trp bonds also occurs).. In terms of biological role, cleaves peptides in various proteins in a process that requires ATP hydrolysis. Has a chymotrypsin-like activity. Plays a major role in the degradation of misfolded proteins. The polypeptide is ATP-dependent Clp protease proteolytic subunit (Pseudomonas fluorescens (strain Pf0-1)).